A 778-amino-acid polypeptide reads, in one-letter code: Endonuclease MutS2 (778 aa).

328 to 335 lines the ATP pocket; sequence GPNTGGKT. Positions 702-777 constitute a Smr domain; that stretch reads LDLRGKRYEE…GSGATIVTFK (76 aa).

The protein belongs to the DNA mismatch repair MutS family. MutS2 subfamily. Homodimer. Binds to stalled ribosomes, contacting rRNA.

Its function is as follows. Endonuclease that is involved in the suppression of homologous recombination and thus may have a key role in the control of bacterial genetic diversity. In terms of biological role, acts as a ribosome collision sensor, splitting the ribosome into its 2 subunits. Detects stalled/collided 70S ribosomes which it binds and splits by an ATP-hydrolysis driven conformational change. Acts upstream of the ribosome quality control system (RQC), a ribosome-associated complex that mediates the extraction of incompletely synthesized nascent chains from stalled ribosomes and their subsequent degradation. Probably generates substrates for RQC. The sequence is that of Endonuclease MutS2 from Streptococcus pneumoniae serotype 19F (strain G54).